Here is a 461-residue protein sequence, read N- to C-terminus: tRNA modification GTPase MnmE (461 aa).

Residues R23, E88, and R127 each contribute to the (6S)-5-formyl-5,6,7,8-tetrahydrofolate site. Positions 223–383 constitute a TrmE-type G domain; it reads GLNTVIVGKP…LKECIKNLFF (161 aa). N233 provides a ligand contact to K(+). Residues 233–238, 252–258, and 277–280 each bind GTP; these read NVGKSS, TEIPGTT, and DTAG. Position 237 (S237) interacts with Mg(2+). K(+) contacts are provided by T252, I254, and T257. T258 contacts Mg(2+). (6S)-5-formyl-5,6,7,8-tetrahydrofolate is bound at residue K461.

The protein belongs to the TRAFAC class TrmE-Era-EngA-EngB-Septin-like GTPase superfamily. TrmE GTPase family. In terms of assembly, homodimer. Heterotetramer of two MnmE and two MnmG subunits. The cofactor is K(+).

The protein resides in the cytoplasm. Functionally, exhibits a very high intrinsic GTPase hydrolysis rate. Involved in the addition of a carboxymethylaminomethyl (cmnm) group at the wobble position (U34) of certain tRNAs, forming tRNA-cmnm(5)s(2)U34. In Clostridium botulinum (strain Okra / Type B1), this protein is tRNA modification GTPase MnmE.